Consider the following 412-residue polypeptide: Translation initiation factor 2 subunit gamma (412 aa).

In terms of domain architecture, tr-type G spans 8-205; the sequence is QAEMNIGMVG…AMYEHFEPPE (198 aa). The segment at 17 to 24 is G1; that stretch reads GHVDHGKT. The Mg(2+) site is built by Asp-20, Thr-24, Gly-45, and Ser-47. Position 20 to 25 (20 to 25) interacts with GTP; the sequence is DHGKTT. Residues 45 to 49 are G2; sequence GISIR. Zn(2+) is bound by residues Cys-60, Cys-63, Cys-72, and Cys-75. Residues 89–92 are G3; that stretch reads DSPG. GTP is bound by residues 145–148 and 183–185; these read NKID and SAQ. The segment at 145–148 is G4; it reads NKID. The segment at 183-185 is G5; that stretch reads SAQ.

It belongs to the TRAFAC class translation factor GTPase superfamily. Classic translation factor GTPase family. EIF2G subfamily. Heterotrimer composed of an alpha, a beta and a gamma chain. Mg(2+) is required as a cofactor.

It carries out the reaction GTP + H2O = GDP + phosphate + H(+). EIF-2 functions in the early steps of protein synthesis by forming a ternary complex with GTP and initiator tRNA. This chain is Translation initiation factor 2 subunit gamma, found in Methanopyrus kandleri (strain AV19 / DSM 6324 / JCM 9639 / NBRC 100938).